A 61-amino-acid polypeptide reads, in one-letter code: Large ribosomal subunit protein bL28 (61 aa).

The tract at residues 1–21 is disordered; sequence MAKDYVTGKKTTFGNKRSHAM.

Belongs to the bacterial ribosomal protein bL28 family.

The polypeptide is Large ribosomal subunit protein bL28 (Lactobacillus helveticus (strain DPC 4571)).